The following is a 257-amino-acid chain: Thiazole synthase (257 aa).

The Schiff-base intermediate with DXP role is filled by Lys-100. Residues Gly-161, 187–188 (AG), and 209–210 (NT) each bind 1-deoxy-D-xylulose 5-phosphate.

It belongs to the ThiG family. In terms of assembly, homotetramer. Forms heterodimers with either ThiH or ThiS.

It is found in the cytoplasm. The catalysed reaction is [ThiS sulfur-carrier protein]-C-terminal-Gly-aminoethanethioate + 2-iminoacetate + 1-deoxy-D-xylulose 5-phosphate = [ThiS sulfur-carrier protein]-C-terminal Gly-Gly + 2-[(2R,5Z)-2-carboxy-4-methylthiazol-5(2H)-ylidene]ethyl phosphate + 2 H2O + H(+). It participates in cofactor biosynthesis; thiamine diphosphate biosynthesis. Its function is as follows. Catalyzes the rearrangement of 1-deoxy-D-xylulose 5-phosphate (DXP) to produce the thiazole phosphate moiety of thiamine. Sulfur is provided by the thiocarboxylate moiety of the carrier protein ThiS. In vitro, sulfur can be provided by H(2)S. This chain is Thiazole synthase, found in Zymomonas mobilis subsp. mobilis (strain ATCC 31821 / ZM4 / CP4).